Here is a 1047-residue protein sequence, read N- to C-terminus: Ribonucleoside-diphosphate reductase subunit alpha (1047 aa).

ATP-cone domains lie at 9–111, 118–219, and 237–327; these read CTIV…KAHR, LSVV…ARVR, and VEVL…EALG. Substrate contacts are provided by residues T442, 457-458, G486, 670-674, and 857-861; these read SC, NLCTE, and PTATI. A disulfide bridge links C458 with C687. The Proton acceptor role is filled by N670. Catalysis depends on C672, which acts as the Cysteine radical intermediate. The Proton acceptor role is filled by E674.

The protein belongs to the ribonucleoside diphosphate reductase large chain family. Tetramer of two alpha and two beta subunits.

The catalysed reaction is a 2'-deoxyribonucleoside 5'-diphosphate + [thioredoxin]-disulfide + H2O = a ribonucleoside 5'-diphosphate + [thioredoxin]-dithiol. With respect to regulation, under complex allosteric control mediated by deoxynucleoside triphosphates and ATP binding. The type of nucleotide bound at the specificity site determines substrate preference. It seems probable that ATP makes the enzyme reduce CDP and UDP, dGTP favors ADP reduction and dTTP favors GDP reduction. Its function is as follows. Provides the precursors necessary for DNA synthesis. Catalyzes the biosynthesis of deoxyribonucleotides from the corresponding ribonucleotides. This Chlamydia trachomatis serovar D (strain ATCC VR-885 / DSM 19411 / UW-3/Cx) protein is Ribonucleoside-diphosphate reductase subunit alpha (nrdA).